The sequence spans 158 residues: NAD(P)H-quinone oxidoreductase subunit J, chloroplastic (158 aa).

Belongs to the complex I 30 kDa subunit family. In terms of assembly, NDH is composed of at least 16 different subunits, 5 of which are encoded in the nucleus.

It localises to the plastid. Its subcellular location is the chloroplast thylakoid membrane. It catalyses the reaction a plastoquinone + NADH + (n+1) H(+)(in) = a plastoquinol + NAD(+) + n H(+)(out). It carries out the reaction a plastoquinone + NADPH + (n+1) H(+)(in) = a plastoquinol + NADP(+) + n H(+)(out). Its function is as follows. NDH shuttles electrons from NAD(P)H:plastoquinone, via FMN and iron-sulfur (Fe-S) centers, to quinones in the photosynthetic chain and possibly in a chloroplast respiratory chain. The immediate electron acceptor for the enzyme in this species is believed to be plastoquinone. Couples the redox reaction to proton translocation, and thus conserves the redox energy in a proton gradient. The polypeptide is NAD(P)H-quinone oxidoreductase subunit J, chloroplastic (Cicer arietinum (Chickpea)).